The sequence spans 199 residues: Superoxide dismutase [Cu-Zn] (199 aa).

The first 22 residues, Met-1–Ala-22, serve as a signal peptide directing secretion. 3 residues coordinate Cu cation: His-92, His-94, and His-117. Residues Cys-99 and Cys-195 are joined by a disulfide bond. 4 residues coordinate Zn(2+): His-117, His-126, His-135, and Asp-138. A Cu cation-binding site is contributed by His-173.

Belongs to the Cu-Zn superoxide dismutase family. Homodimer. The cofactor is Cu cation. Zn(2+) serves as cofactor.

The protein resides in the periplasm. It catalyses the reaction 2 superoxide + 2 H(+) = H2O2 + O2. In terms of biological role, destroys radicals which are normally produced within the cells and which are toxic to biological systems. May play a role in the interactive biology of organisms with their hosts and so contribute to their capacity to cause disease. The polypeptide is Superoxide dismutase [Cu-Zn] (sodC) (Haemophilus ducreyi (strain 35000HP / ATCC 700724)).